The chain runs to 217 residues: Enoyl-CoA-hydratase (217 aa).

It belongs to the enoyl-CoA hydratase/isomerase family.

The catalysed reaction is a (3S)-3-hydroxyacyl-CoA = a (2E)-enoyl-CoA + H2O. It catalyses the reaction a 4-saturated-(3S)-3-hydroxyacyl-CoA = a (3E)-enoyl-CoA + H2O. It functions in the pathway antibiotic biosynthesis; vancomycin biosynthesis. Its function is as follows. Involved in the biosynthesis of the nonproteinogenic amino acid monomer (S)-3,5-dihydroxyphenylglycine (Dpg) responsible of the production of vancomycin and teicoplanin antibiotics. Catalyzes the syn-addition of a water molecule across the double bond of a trans-2-enoyl-CoA thioester, resulting in the formation of a beta-hydroxyacyl-CoA thioester. Physiologically, DpgB could act as a dehydratase, facilitating the aromatization of the DPA-S-DgpA or DPA-S-CoA intermediate. The polypeptide is Enoyl-CoA-hydratase (dpgB) (Amycolatopsis orientalis (Nocardia orientalis)).